A 360-amino-acid polypeptide reads, in one-letter code: Peptide chain release factor 1 (360 aa).

Q235 carries the N5-methylglutamine modification. Residues 286–313 are disordered; it reads RQQAEASTRRNLLGSGDRSDRNRTYNFP.

It belongs to the prokaryotic/mitochondrial release factor family. In terms of processing, methylated by PrmC. Methylation increases the termination efficiency of RF1.

The protein localises to the cytoplasm. Its function is as follows. Peptide chain release factor 1 directs the termination of translation in response to the peptide chain termination codons UAG and UAA. The polypeptide is Peptide chain release factor 1 (Cronobacter sakazakii (strain ATCC BAA-894) (Enterobacter sakazakii)).